Here is a 561-residue protein sequence, read N- to C-terminus: MYSNIELFTMIAIIVLLTKPLGTYMYNIFEYKPMRSDKIFLPVENFIYKITGINPEEEMDWKKYALTFLLVNMVMMIITYFILRVQQFLPLNPTGAKNMESSLAFNTVISFMTNTNLQHYAGEDGITFLSQMIVIVFLMFTSAASGLVTAAAIMRGLSKKTTNLGNFYADFVRITVRLLLPISMLATLILVWQGVPQTFAGKVVVDTLEGGKQTIITGPVAVLESIKHLGTNGGGFFGANSSHPFENPTWLTNMIEMLLMMLLPTSLIYTYGLMINNKKHALVLYISLFVIFILLAVGAVYAENHPGVAYSKLHIYGKPYGNYEGKEVRFGVSQSPLFATVTTAFTTGSVDSMHDSYTPLGGAVPLILMMLNTIFGGDGAGLQNIIMYTILTVFLTGLMVGRTPEYLGRKIETKEIKLIALAILVHPFLILFSSALTVMLKVGASSVTNPLYHGLTQVLYEFSSAAANNGSEFAGFIGNTVFMNIMTGLVMFFGRYITIILMLAVAGSMAEKIPAPPSPGTFRTDNAIFGAIFIAVVLIVGALTFFPAVILGPISEFLSMT.

11 consecutive transmembrane segments (helical) span residues 5 to 25 (IELFTMIAIIVLLTKPLGTYM), 63 to 83 (KYALTFLLVNMVMMIITYFIL), 103 to 122 (LAFNTVISFMTNTNLQHYAG), 133 to 153 (IVIVFLMFTSAASGLVTAAAI), 179 to 199 (LLPISMLATLILVWQGVPQTF), 255 to 275 (IEMLLMMLLPTSLIYTYGLMI), 281 to 301 (ALVLYISLFVIFILLAVGAVY), 380 to 400 (AGLQNIIMYTILTVFLTGLMV), 418 to 438 (LIALAILVHPFLILFSSALTV), 485 to 505 (IMTGLVMFFGRYITIILMLAV), and 531 to 551 (AIFIAVVLIVGALTFFPAVIL).

Belongs to the KdpA family. The system is composed of three essential subunits: KdpA, KdpB and KdpC.

It is found in the cell membrane. Its function is as follows. Part of the high-affinity ATP-driven potassium transport (or Kdp) system, which catalyzes the hydrolysis of ATP coupled with the electrogenic transport of potassium into the cytoplasm. This subunit binds the extracellular potassium ions and delivers the ions to the membrane domain of KdpB through an intramembrane tunnel. This is Potassium-transporting ATPase potassium-binding subunit from Caldanaerobacter subterraneus subsp. tengcongensis (strain DSM 15242 / JCM 11007 / NBRC 100824 / MB4) (Thermoanaerobacter tengcongensis).